The primary structure comprises 667 residues: UvrABC system protein B (667 aa).

In terms of domain architecture, Helicase ATP-binding spans 31-414 (AGIESGEKEQ…EMDRTKHVVQ (384 aa)). 44-51 (GATGTGKT) contacts ATP. The short motif at 97–120 (YYDYYQPEAYVPSSDTYIEKDSAI) is the Beta-hairpin element. Positions 435–597 (QIDDLVGEIN…ITPHTIKKAI (163 aa)) constitute a Helicase C-terminal domain. A UVR domain is found at 630 to 665 (LDMISKLEEQMKTAAKKLDFEQAATLRDTVMELKAQ).

The protein belongs to the UvrB family. As to quaternary structure, forms a heterotetramer with UvrA during the search for lesions. Interacts with UvrC in an incision complex.

Its subcellular location is the cytoplasm. In terms of biological role, the UvrABC repair system catalyzes the recognition and processing of DNA lesions. A damage recognition complex composed of 2 UvrA and 2 UvrB subunits scans DNA for abnormalities. Upon binding of the UvrA(2)B(2) complex to a putative damaged site, the DNA wraps around one UvrB monomer. DNA wrap is dependent on ATP binding by UvrB and probably causes local melting of the DNA helix, facilitating insertion of UvrB beta-hairpin between the DNA strands. Then UvrB probes one DNA strand for the presence of a lesion. If a lesion is found the UvrA subunits dissociate and the UvrB-DNA preincision complex is formed. This complex is subsequently bound by UvrC and the second UvrB is released. If no lesion is found, the DNA wraps around the other UvrB subunit that will check the other stand for damage. In Lactiplantibacillus plantarum (strain ATCC BAA-793 / NCIMB 8826 / WCFS1) (Lactobacillus plantarum), this protein is UvrABC system protein B.